A 1350-amino-acid chain; its full sequence is Probable serine/threonine-protein kinase irlE (1350 aa).

N-linked (GlcNAc...) asparagine glycosylation is present at Asn37. The chain crosses the membrane as a helical span at residues 149–169 (FWEILASCYGTISFIKFFNIF). A coiled-coil region spans residues 731 to 802 (EAELKEKFEI…NIQQNYENQH (72 aa)). A compositionally biased stretch (basic residues) spans 761 to 771 (LKKKNKLKKQK). Disordered stretches follow at residues 761-795 (LKKKNKLKKQKNQQQQQQAKQQAQQQKQQHQQNIQ) and 807-864 (RKFN…TTNS). Residues 772–795 (NQQQQQQAKQQAQQQKQQHQQNIQ) are compositionally biased toward low complexity. Positions 809–823 (FNQQTKGRPISPSSI) are enriched in polar residues. The segment covering 824–864 (QNQNLNPTLLQNQNQTSNPTPNLESTKKATPTTTTTTTTNS) has biased composition (low complexity). The 264-residue stretch at 903–1166 (KKESNILGRG…LSSVLKHPLF (264 aa)) folds into the Protein kinase domain. Residues 909-917 (LGRGSNGTL) and Lys932 contribute to the ATP site. The active-site Proton acceptor is Asp1034. One can recognise a KEN domain in the interval 1169–1346 (SLKKIKFLES…KNSIHFSNDT (178 aa)).

Belongs to the protein kinase superfamily. Ser/Thr protein kinase family.

Its subcellular location is the membrane. It carries out the reaction L-seryl-[protein] + ATP = O-phospho-L-seryl-[protein] + ADP + H(+). The catalysed reaction is L-threonyl-[protein] + ATP = O-phospho-L-threonyl-[protein] + ADP + H(+). This is Probable serine/threonine-protein kinase irlE (irlE) from Dictyostelium discoideum (Social amoeba).